Reading from the N-terminus, the 104-residue chain is Type VII secretion system extracellular protein B (104 aa).

Belongs to the WXG100 family. In terms of assembly, homodimer. When mixed with EsxA does not form heterodimers.

Its subcellular location is the secreted. In terms of biological role, virulence factor that is important for the establishment of infection in the host. EsxB is required for EsxA synthesis as well as secretion. Mediates together with EsxA the release of S.aureus from the host cell. Also inhibits host cytokine production and thus modulates dendritic cell-mediated immunity. In Staphylococcus aureus (strain Mu50 / ATCC 700699), this protein is Type VII secretion system extracellular protein B.